Consider the following 252-residue polypeptide: Transcriptional regulatory protein HptR (252 aa).

One can recognise a Response regulatory domain in the interval 3 to 118 (KVVICDDERI…QLEVILGRLV (116 aa)). D55 bears the 4-aspartylphosphate mark. The HTH araC/xylS-type domain maps to 153-250 (NQIVDQIKQS…QMSPSDYCKQ (98 aa)). DNA-binding regions (H-T-H motif) lie at residues 170–191 (SDLIQHIDVSESYAMRTFKDHV) and 217–240 (HYEIADKVGFSEYKMFSYHFKKYL).

Phosphorylated by HptS.

It localises to the cytoplasm. In terms of biological role, member of the two-component regulatory system HptS/HptR that regulates genes involved in hexose phosphate transport system in response to changes in extracellular phosphate sources. Activates uhpT expression to facilitate glucose-6-phosphate/G6P utilization by directly binding to its promoter. Antagonizes CcpA-dependent transcription of a subset of CcpA-regulated genes involved in antibiotic susceptibility. This is Transcriptional regulatory protein HptR (hptR) from Staphylococcus aureus (strain MRSA252).